The chain runs to 890 residues: Protein translocase subunit SecA (890 aa).

Residues Gln-85, 103–107, and Asp-491 contribute to the ATP site; that span reads GEGKT.

Belongs to the SecA family. As to quaternary structure, monomer and homodimer. Part of the essential Sec protein translocation apparatus which comprises SecA, SecYEG and auxiliary proteins SecDF. Other proteins may also be involved.

The protein resides in the cell membrane. Its subcellular location is the cytoplasm. The enzyme catalyses ATP + H2O + cellular proteinSide 1 = ADP + phosphate + cellular proteinSide 2.. Functionally, part of the Sec protein translocase complex. Interacts with the SecYEG preprotein conducting channel. Has a central role in coupling the hydrolysis of ATP to the transfer of proteins into and across the cell membrane, serving as an ATP-driven molecular motor driving the stepwise translocation of polypeptide chains across the membrane. The chain is Protein translocase subunit SecA from Mycoplasmoides gallisepticum (strain R(low / passage 15 / clone 2)) (Mycoplasma gallisepticum).